Consider the following 318-residue polypeptide: Methionyl-tRNA formyltransferase (318 aa).

Residue 112–115 (SILP) coordinates (6S)-5,6,7,8-tetrahydrofolate.

This sequence belongs to the Fmt family.

The catalysed reaction is L-methionyl-tRNA(fMet) + (6R)-10-formyltetrahydrofolate = N-formyl-L-methionyl-tRNA(fMet) + (6S)-5,6,7,8-tetrahydrofolate + H(+). Functionally, attaches a formyl group to the free amino group of methionyl-tRNA(fMet). The formyl group appears to play a dual role in the initiator identity of N-formylmethionyl-tRNA by promoting its recognition by IF2 and preventing the misappropriation of this tRNA by the elongation apparatus. The chain is Methionyl-tRNA formyltransferase from Shewanella sp. (strain MR-7).